Here is a 187-residue protein sequence, read N- to C-terminus: Photosystem I assembly protein Ycf4 (187 aa).

Transmembrane regions (helical) follow at residues 25–45 (YLWA…GISS) and 69–89 (MSFY…TVIW).

Belongs to the Ycf4 family.

Its subcellular location is the cellular thylakoid membrane. Seems to be required for the assembly of the photosystem I complex. The polypeptide is Photosystem I assembly protein Ycf4 (Trichodesmium erythraeum (strain IMS101)).